Here is a 278-residue protein sequence, read N- to C-terminus: HTH-type transcriptional activator RhaS (278 aa).

An HTH araC/xylS-type domain is found at 174–272 (NLLLAWLEDH…NWSPRDIRQG (99 aa)). DNA-binding regions (H-T-H motif) lie at residues 191–212 (DAVA…KQQT) and 239–262 (VTDI…RREF).

Binds DNA as a dimer.

It localises to the cytoplasm. In terms of biological role, activates expression of the rhaBAD and rhaT operons. The polypeptide is HTH-type transcriptional activator RhaS (Escherichia coli (strain SMS-3-5 / SECEC)).